Consider the following 268-residue polypeptide: Myb-related protein 315 (268 aa).

2 consecutive HTH myb-type domains span residues 9 to 61 (KFGL…MNYL) and 62 to 116 (RPDL…KKKL). 2 DNA-binding regions (H-T-H motif) span residues 37–61 (WRVI…MNYL) and 89–112 (WSKI…NTHI).

Expressed in roots, stems, leaves, seed pods and flowers. Strongest expression in the stem.

Its subcellular location is the nucleus. In terms of biological role, transcription factor. The sequence is that of Myb-related protein 315 from Antirrhinum majus (Garden snapdragon).